The chain runs to 1254 residues: DNA-directed RNA polymerase subunit beta (1254 aa).

The protein belongs to the RNA polymerase beta chain family. In terms of assembly, the RNAP catalytic core consists of 2 alpha, 1 beta, 1 beta' and 1 omega subunit. When a sigma factor is associated with the core the holoenzyme is formed, which can initiate transcription.

It carries out the reaction RNA(n) + a ribonucleoside 5'-triphosphate = RNA(n+1) + diphosphate. Its function is as follows. DNA-dependent RNA polymerase catalyzes the transcription of DNA into RNA using the four ribonucleoside triphosphates as substrates. The chain is DNA-directed RNA polymerase subunit beta from Protochlamydia amoebophila (strain UWE25).